The chain runs to 645 residues: Protein LHY (645 aa).

Residue Ser6 is modified to Phosphoserine. An HTH myb-type domain is found at 19–73 (TITKQRERWTEDEHERFLEALRLYGRAWQRIEEHIGTKTAVQIRSHAQKFFTKLE). The segment at residues 46 to 69 (WQRIEEHIGTKTAVQIRSHAQKFF) is a DNA-binding region (H-T-H motif). Disordered stretches follow at residues 89–127 (IEIP…AKLV), 149–212 (EKTS…GTTV), 410–437 (QNLA…ADSK), and 458–500 (AQKK…TDEN). Over residues 110 to 120 (NNGTSSSQVSS) the composition is skewed to polar residues. Residues 149 to 158 (EKTSTGKENQ) show a composition bias toward basic and acidic residues. Over residues 159–169 (DENCSGVSTVN) the composition is skewed to polar residues. The segment covering 197-207 (VPKKNKDKDGN) has biased composition (basic and acidic residues). The span at 468–478 (SCGSNTPSGSD) shows a compositional bias: polar residues. Over residues 483-498 (ALDKMEKDKEDVKETD) the composition is skewed to basic and acidic residues.

Homodimer or heterodimer with CCA1. Interacts with CCA1 (via internal domain); independently of photoperiod. Functions probably as part of a large complex. Interacts with CKB1 and CKB3. Interacts with LNK1 and LNK2. Phosphorylated by CK2. Expressed in leaves, roots, stems, flowers and siliques.

It localises to the nucleus. In terms of biological role, transcription factor involved in the circadian clock. Binds to the promoter region of APRR1/TOC1 and TCP21/CHE to repress their transcription. Represses both CCA1 and itself. May recognize the promoter of JMJ14 to regulates its expression during the night in a circadian manner. In Arabidopsis thaliana (Mouse-ear cress), this protein is Protein LHY.